The following is a 245-amino-acid chain: 1-(5-phosphoribosyl)-5-[(5-phosphoribosylamino)methylideneamino] imidazole-4-carboxamide isomerase (245 aa).

D8 functions as the Proton acceptor in the catalytic mechanism. D129 (proton donor) is an active-site residue.

It belongs to the HisA/HisF family.

It is found in the cytoplasm. The catalysed reaction is 1-(5-phospho-beta-D-ribosyl)-5-[(5-phospho-beta-D-ribosylamino)methylideneamino]imidazole-4-carboxamide = 5-[(5-phospho-1-deoxy-D-ribulos-1-ylimino)methylamino]-1-(5-phospho-beta-D-ribosyl)imidazole-4-carboxamide. It functions in the pathway amino-acid biosynthesis; L-histidine biosynthesis; L-histidine from 5-phospho-alpha-D-ribose 1-diphosphate: step 4/9. The chain is 1-(5-phosphoribosyl)-5-[(5-phosphoribosylamino)methylideneamino] imidazole-4-carboxamide isomerase from Geotalea uraniireducens (strain Rf4) (Geobacter uraniireducens).